Reading from the N-terminus, the 365-residue chain is Class I histocompatibility antigen, B alpha chain (365 aa).

The first 24 residues, 1 to 24 (MTVMAPRTLLLLLSGALVLTETWA), serve as a signal peptide directing secretion. The interval 25–114 (GSHSMRYFST…ALGYYNQSEA (90 aa)) is alpha-1. At 25–308 (GSHSMRYFST…EPPSQPTIPI (284 aa)) the chain is on the extracellular side. Asparagine 110 carries N-linked (GlcNAc...) asparagine glycosylation. Positions 115 to 206 (GSHTIQMMSG…ENGKETLQRA (92 aa)) are alpha-2. 2 disulfide bridges follow: cysteine 125-cysteine 188 and cysteine 227-cysteine 283. Residues 207–298 (EPPKTHVTHH…GLPEPLTLRW (92 aa)) form an alpha-3 region. The 89-residue stretch at 209–297 (PKTHVTHHPV…EGLPEPLTLR (89 aa)) folds into the Ig-like C1-type domain. The connecting peptide stretch occupies residues 299–308 (EPPSQPTIPI). The chain crosses the membrane as a helical span at residues 309–332 (MGIVAILAILGAVVTGAVVTAVMW). Residues 333-365 (RKKSSDKKGGSYSQAARSDSAQGSDVSLTACKV) are Cytoplasmic-facing. Positions 337–361 (SDKKGGSYSQAARSDSAQGSDVSLT) are disordered. Polar residues predominate over residues 346–359 (QAARSDSAQGSDVS). Serine 356 and serine 359 each carry phosphoserine.

This sequence belongs to the MHC class I family. In terms of assembly, heterodimer of an alpha chain and a beta chain (beta-2-microglobulin).

The protein localises to the membrane. Functionally, involved in the presentation of foreign antigens to the immune system. The polypeptide is Class I histocompatibility antigen, B alpha chain (Saguinus oedipus (Cotton-top tamarin)).